The chain runs to 55 residues: Large ribosomal subunit protein bL33 (55 aa).

Belongs to the bacterial ribosomal protein bL33 family.

This is Large ribosomal subunit protein bL33 from Burkholderia ambifaria (strain MC40-6).